Here is a 321-residue protein sequence, read N- to C-terminus: Phospho-N-acetylmuramoyl-pentapeptide-transferase (321 aa).

The next 10 membrane-spanning stretches (helical) occupy residues 1 to 21, 50 to 70, 76 to 96, 112 to 132, 140 to 160, 176 to 196, 200 to 220, 225 to 245, 250 to 270, and 300 to 320; these read MIFIYAIIALLITFILVPILI, MGGLTFLISIIITSIIAIIFV, IILLLFVTIGFGLIGFIDDYI, FLAQIIIAVIFFVLSDVFHLV, IPFVNFDIPLSFAYVIFIVFW, GLATGLSIIGFAMYAVMSYML, AIGIFCIIMIFALLGFLPYNL, VFMGDTGSLALGGIFATISIM, LSLILIGFVFVVETLSVMLQV, and VVTVFWTVGLITGLIGLWIGV.

Belongs to the glycosyltransferase 4 family. MraY subfamily. The cofactor is Mg(2+).

The protein resides in the cell membrane. The enzyme catalyses UDP-N-acetyl-alpha-D-muramoyl-L-alanyl-gamma-D-glutamyl-L-lysyl-D-alanyl-D-alanine + di-trans,octa-cis-undecaprenyl phosphate = Mur2Ac(oyl-L-Ala-gamma-D-Glu-L-Lys-D-Ala-D-Ala)-di-trans,octa-cis-undecaprenyl diphosphate + UMP. Its pathway is cell wall biogenesis; peptidoglycan biosynthesis. Functionally, catalyzes the initial step of the lipid cycle reactions in the biosynthesis of the cell wall peptidoglycan: transfers peptidoglycan precursor phospho-MurNAc-pentapeptide from UDP-MurNAc-pentapeptide onto the lipid carrier undecaprenyl phosphate, yielding undecaprenyl-pyrophosphoryl-MurNAc-pentapeptide, known as lipid I. This is Phospho-N-acetylmuramoyl-pentapeptide-transferase from Staphylococcus epidermidis (strain ATCC 35984 / DSM 28319 / BCRC 17069 / CCUG 31568 / BM 3577 / RP62A).